We begin with the raw amino-acid sequence, 307 residues long: Oxygen-dependent coproporphyrinogen-III oxidase (307 aa).

Position 99 (Ser-99) interacts with substrate. The a divalent metal cation site is built by His-103 and His-113. The active-site Proton donor is the His-113. 115-117 (NVR) is a substrate binding site. Residues His-152 and His-182 each coordinate a divalent metal cation. The important for dimerization stretch occupies residues 247–282 (YVEFNLVFDRGTLFGLQSGGRTESILLSMPPTAGWR). 265–267 (GGR) contributes to the substrate binding site.

It belongs to the aerobic coproporphyrinogen-III oxidase family. In terms of assembly, homodimer. The cofactor is a divalent metal cation.

It is found in the cytoplasm. The enzyme catalyses coproporphyrinogen III + O2 + 2 H(+) = protoporphyrinogen IX + 2 CO2 + 2 H2O. Its pathway is porphyrin-containing compound metabolism; protoporphyrin-IX biosynthesis; protoporphyrinogen-IX from coproporphyrinogen-III (O2 route): step 1/1. In terms of biological role, involved in the heme biosynthesis. Catalyzes the aerobic oxidative decarboxylation of propionate groups of rings A and B of coproporphyrinogen-III to yield the vinyl groups in protoporphyrinogen-IX. In Burkholderia pseudomallei (strain 1106a), this protein is Oxygen-dependent coproporphyrinogen-III oxidase.